The following is a 295-amino-acid chain: UDP-3-O-acyl-N-acetylglucosamine deacetylase (295 aa).

Zn(2+) contacts are provided by H75, H232, and D236. H259 acts as the Proton donor in catalysis.

The protein belongs to the LpxC family. Requires Zn(2+) as cofactor.

The enzyme catalyses a UDP-3-O-[(3R)-3-hydroxyacyl]-N-acetyl-alpha-D-glucosamine + H2O = a UDP-3-O-[(3R)-3-hydroxyacyl]-alpha-D-glucosamine + acetate. The protein operates within glycolipid biosynthesis; lipid IV(A) biosynthesis; lipid IV(A) from (3R)-3-hydroxytetradecanoyl-[acyl-carrier-protein] and UDP-N-acetyl-alpha-D-glucosamine: step 2/6. In terms of biological role, catalyzes the hydrolysis of UDP-3-O-myristoyl-N-acetylglucosamine to form UDP-3-O-myristoylglucosamine and acetate, the committed step in lipid A biosynthesis. The polypeptide is UDP-3-O-acyl-N-acetylglucosamine deacetylase (Helicobacter pylori (strain J99 / ATCC 700824) (Campylobacter pylori J99)).